A 540-amino-acid polypeptide reads, in one-letter code: 2,3-bisphosphoglycerate-independent phosphoglycerate mutase (540 aa).

Residues Asp24 and Ser74 each contribute to the Mn(2+) site. Catalysis depends on Ser74, which acts as the Phosphoserine intermediate. Substrate-binding positions include His135, 165–166 (RD), Arg197, Arg203, 268–271 (RPDR), and Lys341. Mn(2+) contacts are provided by Asp408, His412, Asp449, His450, and His467.

Belongs to the BPG-independent phosphoglycerate mutase family. Monomer. It depends on Mn(2+) as a cofactor.

It catalyses the reaction (2R)-2-phosphoglycerate = (2R)-3-phosphoglycerate. Its pathway is carbohydrate degradation; glycolysis; pyruvate from D-glyceraldehyde 3-phosphate: step 3/5. Catalyzes the interconversion of 2-phosphoglycerate and 3-phosphoglycerate. The polypeptide is 2,3-bisphosphoglycerate-independent phosphoglycerate mutase (Prochlorococcus marinus (strain SARG / CCMP1375 / SS120)).